We begin with the raw amino-acid sequence, 1059 residues long: Protein OPAQUE10 (1059 aa).

7 consecutive repeat copies span residues 269-342 (SLLE…KESC), 343-416 (SLLE…KESC), 417-490 (SPLE…KESC), 491-564 (SPLE…KESC), 565-638 (FPLE…KESC), 639-712 (SPLE…KESC), and 713-786 (SPLE…KESC). The segment at 269–786 (SLLEPEDSVN…SRPIHDKESC (518 aa)) is 7 X approximate repeats. Residues 511–534 (FNDAPNKESEGYGESGRGKHGEKS) are disordered. The span at 515-534 (PNKESEGYGESGRGKHGEKS) shows a compositional bias: basic and acidic residues. Disordered stretches follow at residues 732 to 756 (QYSDGPNEGNEGYGESGHYKHEEKS), 856 to 875 (ETLADHPKKEEAGLQKDTGT), and 889 to 998 (SVCS…SGKG). The span at 858-869 (LADHPKKEEAGL) shows a compositional bias: basic and acidic residues. Polar residues-rich tracts occupy residues 907 to 924 (DFSSESHSRLTPTHNTGG) and 945 to 958 (ASDSTNPELNPEAS). The span at 984 to 994 (TRGRPEGDAPR) shows a compositional bias: basic and acidic residues. The chain crosses the membrane as a helical span at residues 1003–1023 (VAGGITLVGAVFFMFHLSAAL).

In terms of assembly, homodimer. Interacts (via N-terminus) with FL1 (via C-terminus), HIP, 19 kDa alpha-zein (AC P06677), 22 kDa alpha-zein (AC O48966), 16 kDa gamma-zein (AC P08031) and 50 kDa gamma-zein (AC C0P381). Expressed in kernels.

It is found in the endoplasmic reticulum membrane. Its function is as follows. Cereal endosperm protein required for the ring-shaped distribution of 22 kDa alpha- and 16 kDa gamma-zeins in protein bodies. This Zea mays (Maize) protein is Protein OPAQUE10.